Here is a 652-residue protein sequence, read N- to C-terminus: tRNA 5-methylaminomethyl-2-thiouridine biosynthesis bifunctional protein MnmC (652 aa).

Residues 1 to 235 (MPDRLVPATL…EPALRVGEYA (235 aa)) are tRNA (mnm(5)s(2)U34)-methyltransferase. Residues 259–652 (IGAGLAGCAV…IRALRGRQIG (394 aa)) form an FAD-dependent cmnm(5)s(2)U34 oxidoreductase region.

It in the N-terminal section; belongs to the methyltransferase superfamily. tRNA (mnm(5)s(2)U34)-methyltransferase family. This sequence in the C-terminal section; belongs to the DAO family. It depends on FAD as a cofactor.

The protein resides in the cytoplasm. The enzyme catalyses 5-aminomethyl-2-thiouridine(34) in tRNA + S-adenosyl-L-methionine = 5-methylaminomethyl-2-thiouridine(34) in tRNA + S-adenosyl-L-homocysteine + H(+). Its function is as follows. Catalyzes the last two steps in the biosynthesis of 5-methylaminomethyl-2-thiouridine (mnm(5)s(2)U) at the wobble position (U34) in tRNA. Catalyzes the FAD-dependent demodification of cmnm(5)s(2)U34 to nm(5)s(2)U34, followed by the transfer of a methyl group from S-adenosyl-L-methionine to nm(5)s(2)U34, to form mnm(5)s(2)U34. The polypeptide is tRNA 5-methylaminomethyl-2-thiouridine biosynthesis bifunctional protein MnmC (Burkholderia ambifaria (strain MC40-6)).